The chain runs to 674 residues: Zyxin (674 aa).

Positions 35–447 (PPKPKVNPFR…PHQDQTSGSQ (413 aa)) are disordered. Pro residues predominate over residues 86–109 (LPPPPPNEEPMSPPGSSFPPPPPS). A compositionally biased stretch (low complexity) spans 110–120 (FGDDGPGSPLG). Composition is skewed to pro residues over residues 121 to 148 (LFPP…PPPL), 162 to 180 (ASVP…PAPP), 187 to 209 (KPAP…PPQS), 222 to 240 (KPSP…PPVA), and 254 to 266 (AAPP…PPAP). Basic and acidic residues-rich tracts occupy residues 328–341 (AKHE…KHEA) and 358–387 (QRDK…RGER). 3 LIM zinc-binding domains span residues 481–542 (ELCG…TLEC), 543–600 (CAVC…RRYA), and 601–671 (PRCT…RARA).

It belongs to the zyxin/ajuba family. In terms of assembly, interacts (via LIM2 domain) with hesx1/anf1.

It is found in the cytoplasm. It localises to the cytoskeleton. The protein resides in the cell junction. Its subcellular location is the focal adhesion. In terms of biological role, adhesion plaque protein. May be a component of a signal transduction pathway that mediates adhesion-stimulated changes in gene expression. Suppresses the transcription-repressing activity of hesx1/anf1. This is Zyxin from Xenopus tropicalis (Western clawed frog).